The primary structure comprises 569 residues: Mitochondrial import receptor subunit tomm-70 (569 aa).

Residues 1–12 (MVETTGISDQTK) lie on the Mitochondrial intermembrane side of the membrane. Residues 13-32 (KVLIGVAAAATVAGVGYLVY) form a helical membrane-spanning segment. At 33-569 (KSFGGSDLER…KRAAEMLDMY (537 aa)) the chain is on the cytoplasmic side. TPR repeat units lie at residues 44–77 (LEEI…AGPN), 119–152 (TKAY…DSSL), 221–254 (DQKQ…PPAM), and 510–544 (LHLL…APPR).

It belongs to the Tom70 family. As to quaternary structure, forms part of the preprotein translocase complex of the outer mitochondrial membrane (TOM complex). Expressed in body wall muscle cells, the pharynx and structures in the tail.

It localises to the mitochondrion outer membrane. Receptor that accelerates the import of all mitochondrial precursor proteins. This chain is Mitochondrial import receptor subunit tomm-70, found in Caenorhabditis elegans.